The following is a 342-amino-acid chain: Fructose-1,6-bisphosphatase class 1 (342 aa).

Residues Glu97, Asp119, Leu121, and Asp122 each contribute to the Mg(2+) site. Substrate contacts are provided by residues 122–125, Asn215, Tyr247, and Lys280; that span reads DGSS. Residue Glu286 participates in Mg(2+) binding.

The protein belongs to the FBPase class 1 family. Homotetramer. It depends on Mg(2+) as a cofactor.

Its subcellular location is the cytoplasm. It catalyses the reaction beta-D-fructose 1,6-bisphosphate + H2O = beta-D-fructose 6-phosphate + phosphate. It functions in the pathway carbohydrate biosynthesis; gluconeogenesis. This chain is Fructose-1,6-bisphosphatase class 1, found in Leptospira borgpetersenii serovar Hardjo-bovis (strain JB197).